The primary structure comprises 233 residues: Ribosomal RNA small subunit methyltransferase G (233 aa).

The interval 1-25 (MASRQSPMAVSQPDHADRSAALQLT) is disordered. Residues G85, F90, and R155 each coordinate S-adenosyl-L-methionine.

This sequence belongs to the methyltransferase superfamily. RNA methyltransferase RsmG family.

The protein localises to the cytoplasm. It catalyses the reaction guanosine(527) in 16S rRNA + S-adenosyl-L-methionine = N(7)-methylguanosine(527) in 16S rRNA + S-adenosyl-L-homocysteine. Specifically methylates the N7 position of guanine in position 527 of 16S rRNA. This Rhodopseudomonas palustris (strain BisB5) protein is Ribosomal RNA small subunit methyltransferase G.